The primary structure comprises 112 residues: Protein FAM32A (112 aa).

The segment at 23–58 is disordered; that stretch reads TKRKKKKKDKDKAKLLEAMGTSKKNEEEKRRGLDKR. Basic and acidic residues predominate over residues 45–58; the sequence is KKNEEEKRRGLDKR.

This sequence belongs to the FAM32 family.

It localises to the nucleus. In terms of biological role, may induce G2 arrest and apoptosis. May also increase cell sensitivity to apoptotic stimuli. The polypeptide is Protein FAM32A (FAM32A) (Bos taurus (Bovine)).